The following is a 279-amino-acid chain: Ethanolamine utilization protein EutJ (279 aa).

It belongs to the EutJ family.

Its pathway is amine and polyamine degradation; ethanolamine degradation. May protect ethanolamine ammonia-lyase (EAL, eutB-eutC) from inhibition, may function in assembling the bacterial microcompartment and/or in refolding EAL, suggesting it may have chaperone activity. Overexpression of eutJ and eutS in E.coli leads to multiple BMC-like structures; eutS expression alone leads to 1 BMC-like structure per cell. In terms of biological role, expression of the eut operon allows this bacteria to use ethanolamine (EA) as a carbon, nitrogen and energy source. It relies on cobalamin (vitamin B12) both as a cofactor for the ethanolamine ammonia-lyase (EAL) activity and to induce the operon. EA enhances bacterial survival in macrophages in a concentration-dependent manner, suggesting it is an important nutrient during infection. The polypeptide is Ethanolamine utilization protein EutJ (Salmonella typhimurium (strain LT2 / SGSC1412 / ATCC 700720)).